Here is a 345-residue protein sequence, read N- to C-terminus: MRVTDFSFELPDELIARYPMPERTSSRLLSLEGNSGKLGDNQFTDILDMVNPGDLMVFNNTRVIPARLFGQKETGGKLEILVERMLDDKRILAHVRSSKSPKVNTKVCLDGGYEMTMLARHDALFELELNDEKTILEVLEKVGHMPLPPYIDRPDEDADKERYQTVYNDAPGAVAAPTAGLHFDDALLNRLKEKGVDTAFVTLHVGAGTFQPVKVDDVLDHKMHSEWAEVSQEVVDKIAHTKAHGGRVIAVGTTSVRSLESAAKASEDELQPFCRDTDIFIYPGYEFKVVDAMVTNFHLPESTLIMLLSAFAGFDEVKNAYQHAIAQKYRFFSYGDAMFVTKKAN.

It belongs to the QueA family. Monomer.

It is found in the cytoplasm. It catalyses the reaction 7-aminomethyl-7-carbaguanosine(34) in tRNA + S-adenosyl-L-methionine = epoxyqueuosine(34) in tRNA + adenine + L-methionine + 2 H(+). The protein operates within tRNA modification; tRNA-queuosine biosynthesis. Functionally, transfers and isomerizes the ribose moiety from AdoMet to the 7-aminomethyl group of 7-deazaguanine (preQ1-tRNA) to give epoxyqueuosine (oQ-tRNA). The sequence is that of S-adenosylmethionine:tRNA ribosyltransferase-isomerase from Shewanella woodyi (strain ATCC 51908 / MS32).